The primary structure comprises 334 residues: WD repeat-containing protein 54 (334 aa).

3 WD repeats span residues 162 to 206 (GHQM…TLLT), 208 to 247 (IPGF…LHVQ), and 250 to 289 (AHAR…ESGY).

As to quaternary structure, homodimer and homotrimer; forms tight forms of dimers and trimers. Interacts with IZUMO1 and IZUMO1R/JUNO. Post-translationally, cross-linked to tightly form both dimers and trimers by TGM2. Cross-linking enhances the activation of EGF receptor-mediated signaling pathway. Cross-linking is inhibited by EGF. In terms of processing, ubiquitinated. EGF increases ubiquitination. Expressed in epithelial cells (at protein level). Isoform 3 expression is highly increased in colorectal cancer cells.

It is found in the vesicle. Its subcellular location is the cytoplasm. The protein resides in the cell membrane. Its function is as follows. Plays a role in the adhesion and fusion of the sperm-oocyte membrane through its interactions with IZUMO1 and IZUMO1R/JUNO. When cross-linked to form dimers and trimers, it has a regulatory effect on ERK signaling pathway activity in response to EGF stimulation. Colocalizes with the EGF receptor in WDR54-specific vesicle where it sustains the internalization and controls the degradation of the EGF receptor after EGF stimulation. The chain is WD repeat-containing protein 54 from Homo sapiens (Human).